A 338-amino-acid chain; its full sequence is Holliday junction branch migration complex subunit RuvB (338 aa).

Residues 1–22 (MVDDERVVSPETADDHEDSVEK) form a disordered region. Residues 4 to 185 (DERVVSPETA…FGIVEHMAYY (182 aa)) form a large ATPase domain (RuvB-L) region. ATP contacts are provided by residues Leu24, Arg25, Gly66, Lys69, Thr70, Thr71, 132-134 (EDF), Arg175, Tyr185, and Arg222. Position 70 (Thr70) interacts with Mg(2+). A small ATPAse domain (RuvB-S) region spans residues 186–257 (ETTDLQEIVL…IVDHALDLLR (72 aa)). The tract at residues 260–338 (SAGLDATDIK…HLGRTMPDNN (79 aa)) is head domain (RuvB-H). Residues Arg315 and Arg320 each coordinate DNA.

It belongs to the RuvB family. In terms of assembly, homohexamer. Forms an RuvA(8)-RuvB(12)-Holliday junction (HJ) complex. HJ DNA is sandwiched between 2 RuvA tetramers; dsDNA enters through RuvA and exits via RuvB. An RuvB hexamer assembles on each DNA strand where it exits the tetramer. Each RuvB hexamer is contacted by two RuvA subunits (via domain III) on 2 adjacent RuvB subunits; this complex drives branch migration. In the full resolvosome a probable DNA-RuvA(4)-RuvB(12)-RuvC(2) complex forms which resolves the HJ.

The protein resides in the cytoplasm. It catalyses the reaction ATP + H2O = ADP + phosphate + H(+). Functionally, the RuvA-RuvB-RuvC complex processes Holliday junction (HJ) DNA during genetic recombination and DNA repair, while the RuvA-RuvB complex plays an important role in the rescue of blocked DNA replication forks via replication fork reversal (RFR). RuvA specifically binds to HJ cruciform DNA, conferring on it an open structure. The RuvB hexamer acts as an ATP-dependent pump, pulling dsDNA into and through the RuvAB complex. RuvB forms 2 homohexamers on either side of HJ DNA bound by 1 or 2 RuvA tetramers; 4 subunits per hexamer contact DNA at a time. Coordinated motions by a converter formed by DNA-disengaged RuvB subunits stimulates ATP hydrolysis and nucleotide exchange. Immobilization of the converter enables RuvB to convert the ATP-contained energy into a lever motion, pulling 2 nucleotides of DNA out of the RuvA tetramer per ATP hydrolyzed, thus driving DNA branch migration. The RuvB motors rotate together with the DNA substrate, which together with the progressing nucleotide cycle form the mechanistic basis for DNA recombination by continuous HJ branch migration. Branch migration allows RuvC to scan DNA until it finds its consensus sequence, where it cleaves and resolves cruciform DNA. The sequence is that of Holliday junction branch migration complex subunit RuvB from Levilactobacillus brevis (strain ATCC 367 / BCRC 12310 / CIP 105137 / JCM 1170 / LMG 11437 / NCIMB 947 / NCTC 947) (Lactobacillus brevis).